Here is a 404-residue protein sequence, read N- to C-terminus: POU domain, class 2, transcription factor 3L (404 aa).

Disordered regions lie at residues 1–29 (MNRE…TLDF) and 44–67 (TGIP…MTGE). Basic and acidic residues predominate over residues 16–29 (GHLENDAERDTLDF). One can recognise a POU-specific domain in the interval 187-235 (QGDVGLAMGKLYGNDFSQTTISRFEALNLSFKNMCKLKPLLEKWLNDAE). Residues 259-297 (KRKKRTSIETNIRLTLEKRFQDNPKPSSEEISMIAEQLV) constitute a DNA-binding region (homeobox). The interval 346-367 (MTVTSSCSPGNSSRPSSPTCGL) is disordered. The span at 350–363 (SSCSPGNSSRPSSP) shows a compositional bias: low complexity.

Belongs to the POU transcription factor family. Class-2 subfamily.

The protein resides in the nucleus. Transcription factor that binds to the octamer motif (5'-ATTTGCAT-3') and regulates cell type-specific differentiation pathways. This is POU domain, class 2, transcription factor 3L (pou2f3.L) from Xenopus laevis (African clawed frog).